Reading from the N-terminus, the 493-residue chain is Cysteine--tRNA ligase (493 aa).

Residue Cys29 coordinates Zn(2+). The 'HIGH' region signature appears at 31 to 41 (ATVQSEPHIGH). Zn(2+) contacts are provided by Cys214, His239, and Glu243. Positions 270-274 (KMSKS) match the 'KMSKS' region motif. Lys273 contacts ATP.

This sequence belongs to the class-I aminoacyl-tRNA synthetase family. In terms of assembly, monomer. Zn(2+) is required as a cofactor.

The protein localises to the cytoplasm. The catalysed reaction is tRNA(Cys) + L-cysteine + ATP = L-cysteinyl-tRNA(Cys) + AMP + diphosphate. This Renibacterium salmoninarum (strain ATCC 33209 / DSM 20767 / JCM 11484 / NBRC 15589 / NCIMB 2235) protein is Cysteine--tRNA ligase.